We begin with the raw amino-acid sequence, 282 residues long: Succinate dehydrogenase [ubiquinone] iron-sulfur subunit, mitochondrial (282 aa).

A mitochondrion-targeting transit peptide spans 1–30 (MAAVVGVSLKRGFSATALGRVGLQFQACRE). Residues Lys-53 and Lys-57 each carry the N6-acetyllysine modification. The region spanning 56–135 (DKPRMQTYKV…VSKIYPLPHM (80 aa)) is the 2Fe-2S ferredoxin-type domain. [2Fe-2S] cluster-binding residues include Cys-95, Cys-100, Cys-103, and Cys-115. Positions 148 to 220 (FYAQYKSIEP…PAVLMQAYRW (73 aa)) are interaction with SDHAF1. Positions 178–208 (DREKLDGLYECILCACCSTSCPSYWWNGDKY) constitute a 4Fe-4S ferredoxin-type domain. [4Fe-4S] cluster contacts are provided by Cys-188, Cys-191, and Cys-194. [3Fe-4S] cluster is bound at residue Cys-198. Trp-203 lines the a ubiquinone pocket. [3Fe-4S] cluster-binding residues include Cys-245 and Cys-251. Residue Cys-255 coordinates [4Fe-4S] cluster.

The protein belongs to the succinate dehydrogenase/fumarate reductase iron-sulfur protein family. In terms of assembly, component of complex II composed of four subunits: the flavoprotein (FP) SDHA, iron-sulfur protein (IP) SDHB, and a cytochrome b560 composed of SDHC and SDHD. Interacts with SDHAF1; the interaction is required for iron-sulfur cluster incorporation into SDHB. [2Fe-2S] cluster serves as cofactor. [3Fe-4S] cluster is required as a cofactor. The cofactor is [4Fe-4S] cluster.

The protein localises to the mitochondrion inner membrane. The enzyme catalyses a quinone + succinate = fumarate + a quinol. The catalysed reaction is (R)-malate + a quinone = enol-oxaloacetate + a quinol. It carries out the reaction (S)-malate + a quinone = enol-oxaloacetate + a quinol. It functions in the pathway carbohydrate metabolism; tricarboxylic acid cycle; fumarate from succinate (eukaryal route): step 1/1. With respect to regulation, enol-oxaloacetate inhibits the succinate dehydrogenase activity. Functionally, iron-sulfur protein (IP) subunit of the succinate dehydrogenase complex (mitochondrial respiratory chain complex II), responsible for transferring electrons from succinate to ubiquinone (coenzyme Q). SDH also oxidizes malate to the non-canonical enol form of oxaloacetate, enol-oxaloacetate. Enol-oxaloacetate, which is a potent inhibitor of the succinate dehydrogenase activity, is further isomerized into keto-oxaloacetate. This chain is Succinate dehydrogenase [ubiquinone] iron-sulfur subunit, mitochondrial (Sdhb), found in Rattus norvegicus (Rat).